The chain runs to 240 residues: Probable transcriptional regulator ycf27 (240 aa).

In terms of domain architecture, Response regulatory spans 5–118 (KILVIDDEAS…ELEARIRSVL (114 aa)). Aspartate 54 carries the post-translational modification 4-aspartylphosphate. A DNA-binding region (H-T-H motif) is located at residues 74 to 92 (DVPIIMLTALSDVSDRITG). Residues 133–234 (SGIINIGFLK…ARGTGYLFQR (102 aa)) constitute a DNA-binding region (ompR/PhoB-type).

The protein localises to the plastid. Its subcellular location is the chloroplast. In terms of biological role, probable promoter-specific protein mediating the interaction between DNA and RNA polymerase. This is Probable transcriptional regulator ycf27 (ycf27) from Porphyridium aerugineum (Red microalga).